The chain runs to 60 residues: Sec-independent protein translocase protein TatA (60 aa).

The helical transmembrane segment at 1-21 (MLSNIGVPGLILILVIALVIF) threads the bilayer.

The protein belongs to the TatA/E family. In terms of assembly, forms a complex with TatC.

It localises to the cell membrane. In terms of biological role, part of the twin-arginine translocation (Tat) system that transports large folded proteins containing a characteristic twin-arginine motif in their signal peptide across membranes. TatA could form the protein-conducting channel of the Tat system. This Anoxybacillus flavithermus (strain DSM 21510 / WK1) protein is Sec-independent protein translocase protein TatA.